The primary structure comprises 406 residues: Tryptophan synthase beta chain (406 aa).

At K99 the chain carries N6-(pyridoxal phosphate)lysine.

The protein belongs to the TrpB family. In terms of assembly, tetramer of two alpha and two beta chains. Pyridoxal 5'-phosphate is required as a cofactor.

It carries out the reaction (1S,2R)-1-C-(indol-3-yl)glycerol 3-phosphate + L-serine = D-glyceraldehyde 3-phosphate + L-tryptophan + H2O. Its pathway is amino-acid biosynthesis; L-tryptophan biosynthesis; L-tryptophan from chorismate: step 5/5. Functionally, the beta subunit is responsible for the synthesis of L-tryptophan from indole and L-serine. This is Tryptophan synthase beta chain from Allorhizobium ampelinum (strain ATCC BAA-846 / DSM 112012 / S4) (Agrobacterium vitis (strain S4)).